Consider the following 490-residue polypeptide: Probable diaminopimelate decarboxylase, chloroplastic (490 aa).

A chloroplast-targeting transit peptide spans 1–44 (MAAANLLSRALLPALNPNPSSHSNRVSPSAVSLRCRHGLTASVR). Residues 45–66 (ASLSTAAPSPPPRPAAAAADGR) form a disordered region. Lys-130 bears the N6-(pyridoxal phosphate)lysine mark. Residues Gly-309 and 345-348 (EPGR) each bind pyridoxal 5'-phosphate. Arg-348, Arg-384, and Tyr-388 together coordinate substrate. The active-site Proton donor is the Cys-415. 2 residues coordinate substrate: Glu-416 and Tyr-444. Pyridoxal 5'-phosphate is bound at residue Tyr-444.

Belongs to the Orn/Lys/Arg decarboxylase class-II family. LysA subfamily. As to quaternary structure, homodimer. Requires pyridoxal 5'-phosphate as cofactor.

The protein localises to the plastid. It is found in the chloroplast. The enzyme catalyses meso-2,6-diaminopimelate + H(+) = L-lysine + CO2. The protein operates within amino-acid biosynthesis; L-lysine biosynthesis via DAP pathway; L-lysine from DL-2,6-diaminopimelate: step 1/1. Its function is as follows. Specifically catalyzes the decarboxylation of meso-diaminopimelate (meso-DAP) to L-lysine. This is Probable diaminopimelate decarboxylase, chloroplastic (LYSA) from Oryza sativa subsp. japonica (Rice).